We begin with the raw amino-acid sequence, 598 residues long: Thiamine transporter (598 aa).

At 1-41 the chain is on the cytoplasmic side; sequence MSFGSKVSRALRFLEIPVKDRASVSFLKNPDLQPIKSANQT. A helical membrane pass occupies residues 42–62; it reads WGFWSNFAYWGVMSFSVGTWM. Over 63–73 the chain is Extracellular; it reads SASSALGVGLS. Residues 74-94 traverse the membrane as a helical segment; the sequence is YPETIGTFIVGDVLTIIFTLA. The Cytoplasmic segment spans residues 95–111; it reads NSCPGYDWKVGFTLAQR. A helical membrane pass occupies residues 112–132; sequence FVFGIYGSAFGIIIRILMSIV. The Extracellular portion of the chain corresponds to 133–173; that stretch reads NYGSNAWVGGLCINMILDSWSHHYLHLPNTLSSKVAMTTKE. Residues 174 to 194 traverse the membrane as a helical segment; it reads LIGFIIFHVLTAFCYLMKPYH. Over 195-197 the chain is Cytoplasmic; that stretch reads MNY. The helical transmembrane segment at 198–218 threads the bilayer; sequence ILIWSCVATFFSMLGMVIYLA. The Extracellular portion of the chain corresponds to 219–240; that stretch reads KQAHGVGELFTSTKSTATGSTK. Residues 241–261 form a helical membrane-spanning segment; sequence AWAWVYMISYWFGSVSPGSTN. The Cytoplasmic portion of the chain corresponds to 262-274; that stretch reads QSDYSRFGSSNWA. A helical transmembrane segment spans residues 275–295; that stretch reads IWAGTICALLIPTTLIPVFGV. The Extracellular portion of the chain corresponds to 296-332; the sequence is IGASTCDKLYGEQYWMPMDIFNHWLTTNYSAGARAGA. A helical membrane pass occupies residues 333–353; it reads FFCGLSFVLSQMSYTISNCGF. The Cytoplasmic portion of the chain corresponds to 354–371; sequence ASGMDLAGLLPKYVDIKR. Residues 372-392 form a helical membrane-spanning segment; the sequence is GALFAACVSWACLPWNFYNSS. At 393–394 the chain is on the extracellular side; it reads ST. The chain crosses the membrane as a helical span at residues 395–415; sequence FLTVMSSFGVVMTPIISVMIC. At 416-446 the chain is on the cytoplasmic side; the sequence is DNFLIRKRQYSITNAFILKGEYYFTKGVNWR. A helical transmembrane segment spans residues 447 to 467; the sequence is AIVAWVCGMTPGLPGIAWEVN. Over 468–483 the chain is Extracellular; it reads NDYFHNTGIVNFFYGD. Residues 484 to 504 form a helical membrane-spanning segment; it reads SFFSFLISFFVYWGLCLLFPF. Over 505-598 the chain is Cytoplasmic; the sequence is KITVKHDDKD…QSSTASEKAA (94 aa). At serine 560 the chain carries Phosphoserine. Positions 574-598 are disordered; that stretch reads NTNEFEIVHHKNNEKQSSTASEKAA. Residues 588–598 show a composition bias toward polar residues; sequence KQSSTASEKAA.

Belongs to the purine-cytosine permease (2.A.39) family.

Its subcellular location is the membrane. Responsible for intake of thiamine. In Saccharomyces cerevisiae (strain ATCC 204508 / S288c) (Baker's yeast), this protein is Thiamine transporter (THI7).